Consider the following 436-residue polypeptide: Phosphomethylpyrimidine synthase (436 aa).

Substrate-binding positions include Asn69, Met98, Tyr127, His163, 185–187 (SRG), 226–229 (DACR), and Glu265. Residue His269 coordinates Zn(2+). Residue Tyr292 coordinates substrate. Residue His333 coordinates Zn(2+). 3 residues coordinate [4Fe-4S] cluster: Cys409, Cys412, and Cys416.

It belongs to the ThiC family. [4Fe-4S] cluster serves as cofactor.

The enzyme catalyses 5-amino-1-(5-phospho-beta-D-ribosyl)imidazole + S-adenosyl-L-methionine = 4-amino-2-methyl-5-(phosphooxymethyl)pyrimidine + CO + 5'-deoxyadenosine + formate + L-methionine + 3 H(+). It participates in cofactor biosynthesis; thiamine diphosphate biosynthesis. Its function is as follows. Catalyzes the synthesis of the hydroxymethylpyrimidine phosphate (HMP-P) moiety of thiamine from aminoimidazole ribotide (AIR) in a radical S-adenosyl-L-methionine (SAM)-dependent reaction. The chain is Phosphomethylpyrimidine synthase from Clostridium perfringens (strain SM101 / Type A).